A 1058-amino-acid chain; its full sequence is MKSMDDRTVGLISASSSRASLKIQPEIGYPRICDYCQPIIELMTASEFARHIRQDHTTKEGGSFLCRYGEHGVCQKLPLEGVCDLDFEAHIRRCHTSSQPAGYSSPTSSLVASYTEDSEETASLRSIRLTSDRDTPTIEKKKFTLHSFTQNLSAVLADPSRSRSDLTTFFTRHWGDSFVPTQPVPQSKRLARLADSAFDSYCQSAGESYRRYQAIKRALRLSHADGGVGIGDERQDAEDLPTIFIDPRFTLGDSSTFSDVFTVPANDDLDALKQTLSGRNVIPATPLEIATNRKPGEFRDYEALQNRLEMMHDVVDGRLAGKLVAKTDDFWQVVRSYSGLQEQLANALQCVMVVRKNLKRVDELVCDQSKKIVEVHERYEQKKKLLAKLHDISCLREAQSTVQMMLSQGDYPKAIECIETSLDVLSKELNGVTCFRHLASQLRELYTVIGRMMNEDFASLIQKELGVKPEAGTMIQAEGELSAVLLGLMRMRKYSFIAVLREEIIEGVKSVMRQVIKNQILNNGVDLNDFDPSLTQLGEPVRRMKHADFLKTVKAVMDEEFYFCKRLEALQDILLETVERANPLHRHGSEDIIVERIEEAKDIHESESDDEVGTTFSKSASSGGFSVGGSALSSNASATTLLSIEVRSEAFLRHVLPLIAEFGHQCAQQRISRLLIARAKNASVTEATTPTQLSECIKLVKEFQSKCDKEGWYSTQNQKVGGLGRSVNKLSMDYIEKFHAARKIRIGNMLDTELWKATDVSIVDQNIVDMAMETGQLRNTKRIDDGPIKKSFKRTESAVTIDSTTSTSNQIQGVIVDEENYVVVGSSITMIQLLSDYCEAISEMPSFSQDWNSRVVELLKTFNSRCCQLILGAGALQLVGLKTISVRNLALAGRSLELVCRFIPMVHDEMDRVLPENRKSLLRYFKQVESEYRDHVNEIAAKLISVIAHYTTNCLGMWDVKGVIPSPEFQQICRHMLKFHNGLVGIMPRDQIEALFRQVHENFKANLREHVTGMGITPHDPLKYGYVTKDYMFYQQNVKNMESCRNLELESLNDIMFE.

Positions 369–389 (SKKIVEVHERYEQKKKLLAKL) form a coiled coil.

It belongs to the VPS54 family. In terms of assembly, component of the Golgi-associated retrograde protein (GARP) complex, also called VFT (VPS fifty-three) complex, composed of vps-51, vps-52, vps-53 and vps-54. Within the complex interacts with vps-52 and vps-53.

The protein resides in the golgi apparatus. Its subcellular location is the trans-Golgi network. Functionally, acts as a component of the GARP complex that is involved in retrograde transport from early and late endosomes to the trans-Golgi network (TGN). The GARP complex facilitates tethering as well as SNARE complex assembly at the Golgi. The chain is Vacuolar protein sorting-associated protein 54 from Caenorhabditis elegans.